Here is a 382-residue protein sequence, read N- to C-terminus: Galactokinase (382 aa).

A substrate-binding site is contributed by 34–37; that stretch reads EHTD. Residue 124–130 participates in ATP binding; the sequence is GAGLSSS. Ser130 and Glu162 together coordinate Mg(2+). The Proton acceptor role is filled by Asp174. A substrate-binding site is contributed by Tyr223.

It belongs to the GHMP kinase family. GalK subfamily.

It localises to the cytoplasm. It carries out the reaction alpha-D-galactose + ATP = alpha-D-galactose 1-phosphate + ADP + H(+). The protein operates within carbohydrate metabolism; galactose metabolism. Its function is as follows. Catalyzes the transfer of the gamma-phosphate of ATP to D-galactose to form alpha-D-galactose-1-phosphate (Gal-1-P). The polypeptide is Galactokinase (Escherichia fergusonii (strain ATCC 35469 / DSM 13698 / CCUG 18766 / IAM 14443 / JCM 21226 / LMG 7866 / NBRC 102419 / NCTC 12128 / CDC 0568-73)).